A 321-amino-acid polypeptide reads, in one-letter code: Ribosomal large subunit pseudouridine synthase D (321 aa).

Residues 16–93 enclose the S4 RNA-binding domain; it reads YRLDYILSKL…IPLNIIYEDN (78 aa). The active site involves Asp-142.

This sequence belongs to the pseudouridine synthase RluA family.

Its subcellular location is the cytoplasm. It carries out the reaction uridine(1911/1915/1917) in 23S rRNA = pseudouridine(1911/1915/1917) in 23S rRNA. In terms of biological role, responsible for synthesis of pseudouridine from uracil at positions 1911, 1915 and 1917 in 23S ribosomal RNA. In Blochmanniella floridana, this protein is Ribosomal large subunit pseudouridine synthase D (rluD).